Reading from the N-terminus, the 140-residue chain is Protein SamA (140 aa).

Active-site for autocatalytic cleavage activity residues include S61 and K98.

It belongs to the peptidase S24 family.

Its function is as follows. Involved in UV protection and mutation. The sequence is that of Protein SamA (samA) from Salmonella typhimurium (strain LT2 / SGSC1412 / ATCC 700720).